The following is a 63-amino-acid chain: Beta-defensin 35 (63 aa).

A signal peptide spans 1–23; that stretch reads MPQTFFVFCFLFFVFLQLFPGTG. Cystine bridges form between C31-C58, C38-C52, and C42-C59.

The protein belongs to the beta-defensin family. In terms of tissue distribution, expressed in testis, epididymis (caput, corpus and cauda), kidney and neonatal and adult brain.

It is found in the secreted. Its function is as follows. Has antibacterial activity. This chain is Beta-defensin 35 (Defb35), found in Mus musculus (Mouse).